A 185-amino-acid chain; its full sequence is Ribosome-recycling factor (185 aa).

This sequence belongs to the RRF family.

It is found in the cytoplasm. In terms of biological role, responsible for the release of ribosomes from messenger RNA at the termination of protein biosynthesis. May increase the efficiency of translation by recycling ribosomes from one round of translation to another. This Neisseria meningitidis serogroup A / serotype 4A (strain DSM 15465 / Z2491) protein is Ribosome-recycling factor.